The following is a 102-amino-acid chain: Secretoglobin family 1D member (102 aa).

An N-terminal signal peptide occupies residues 1–21 (MRLSVTALLVTLALCYYEANA). Residue Asn-87 is glycosylated (N-linked (GlcNAc...) asparagine).

Belongs to the secretoglobin family. Lipophilin subfamily.

It localises to the secreted. May bind androgens and other steroids. May be under transcriptional regulation of steroid hormones. In Bos taurus (Bovine), this protein is Secretoglobin family 1D member (SCGB1D).